A 362-amino-acid polypeptide reads, in one-letter code: MKASILSKLESLVERYEEVQHLLGDPTVIGDQNKFRALSKEYSQLEEITQCFQAYQQAKEDLVAAEEMAQEDDAEMREMAQDEIKAAKAAIERLTDELQILLLPKDPNDDRNCFLEIRAGAGGDEAGIFAGDLFRMYSRFAEKKGWRIEVMSSSEAEHGGYKEMIAKVNGDGAYGTLKFESGGHRVQRVPATEAQGRIHTSACTVAVMPEIPEAEIPEIKASDLKIDTFRSSGAGGQHVNTTDSAIRITHLPTGIVVECQDERSQHKNKAKAMSVLAARIAQAEESKRAAEISDTRRNLLGSGDRSDRIRTYNYPQGRVSDHRINLTVYRLTEVMEGDMQSLIDPVIHEHQADQLAALADQN.

Glutamine 237 bears the N5-methylglutamine mark. The interval 289–308 (AAEISDTRRNLLGSGDRSDR) is disordered.

Belongs to the prokaryotic/mitochondrial release factor family. Post-translationally, methylated by PrmC. Methylation increases the termination efficiency of RF1.

Its subcellular location is the cytoplasm. Peptide chain release factor 1 directs the termination of translation in response to the peptide chain termination codons UAG and UAA. This is Peptide chain release factor 1 from Vibrio cholerae serotype O1 (strain ATCC 39541 / Classical Ogawa 395 / O395).